Consider the following 478-residue polypeptide: Zinc metalloproteinase/disintegrin (478 aa).

The signal sequence occupies residues 1 to 20 (MIQVLLVTICLAAFPYQGSS). The propeptide occupies 21–188 (IILESGNVND…PIKKVSQLNL (168 aa)). The Peptidase M12B domain maps to 194–391 (RHVDIVVVVD…QNPQCILNKP (198 aa)). Cys-207 and Cys-248 are disulfide-bonded. N-linked (GlcNAc...) (complex) asparagine glycosylation occurs at Asn-279. Cystine bridges form between Cys-305-Cys-386, Cys-345-Cys-370, and Cys-347-Cys-353. Residue His-330 coordinates Zn(2+). Glu-331 is a catalytic residue. Residues His-334 and His-340 each contribute to the Zn(2+) site. Asn-369 is a glycosylation site (N-linked (GlcNAc...) (complex) asparagine). The propeptide occupies 392 to 407 (LRTVSIPVSGNEHLEA). Residues 397 to 478 (IPVSGNEHLE…ADCPRYHSHA (82 aa)) enclose the Disintegrin domain. Disulfide bonds link Cys-411-Cys-426, Cys-413-Cys-421, Cys-420-Cys-443, Cys-434-Cys-440, Cys-439-Cys-464, and Cys-452-Cys-471. Positions 456 to 458 (RGD) match the Cell attachment site motif. Positions 476–478 (SHA) are excised as a propeptide.

Belongs to the venom metalloproteinase (M12B) family. P-II subfamily. P-IIa sub-subfamily. As to quaternary structure, monomeric (disintegrin). Zn(2+) is required as a cofactor. Glycans are composed of 4 GlcNAc, 3 Man, 2 Gal, 2 NeuAC and 1 Fuc residue. Expressed by the venom gland.

The protein resides in the secreted. Impairs hemostasis in the envenomed animal. Its function is as follows. Inhibits platelet aggregation induced by ADP, thrombin, platelet-activating factor and collagen. Acts by inhibiting fibrinogen interaction with platelet receptors alpha-IIb/beta-3 (ITGA2B/ITGB3). The chain is Zinc metalloproteinase/disintegrin from Calloselasma rhodostoma (Malayan pit viper).